Here is a 196-residue protein sequence, read N- to C-terminus: ATP-dependent Clp protease proteolytic subunit (196 aa).

Serine 96 acts as the Nucleophile in catalysis. The active site involves histidine 121.

This sequence belongs to the peptidase S14 family. As to quaternary structure, fourteen ClpP subunits assemble into 2 heptameric rings which stack back to back to give a disk-like structure with a central cavity, resembling the structure of eukaryotic proteasomes.

Its subcellular location is the cytoplasm. It catalyses the reaction Hydrolysis of proteins to small peptides in the presence of ATP and magnesium. alpha-casein is the usual test substrate. In the absence of ATP, only oligopeptides shorter than five residues are hydrolyzed (such as succinyl-Leu-Tyr-|-NHMec, and Leu-Tyr-Leu-|-Tyr-Trp, in which cleavage of the -Tyr-|-Leu- and -Tyr-|-Trp bonds also occurs).. Its function is as follows. Cleaves peptides in various proteins in a process that requires ATP hydrolysis. Has a chymotrypsin-like activity. Plays a major role in the degradation of misfolded proteins. This Streptococcus gordonii (strain Challis / ATCC 35105 / BCRC 15272 / CH1 / DL1 / V288) protein is ATP-dependent Clp protease proteolytic subunit.